The chain runs to 496 residues: L-arabinose isomerase (496 aa).

Residues glutamate 306, glutamate 331, histidine 348, and histidine 447 each coordinate Mn(2+).

The protein belongs to the arabinose isomerase family. Homotetramer. It depends on Mn(2+) as a cofactor.

It catalyses the reaction beta-L-arabinopyranose = L-ribulose. The protein operates within carbohydrate degradation; L-arabinose degradation via L-ribulose; D-xylulose 5-phosphate from L-arabinose (bacterial route): step 1/3. Inhibited by copper. Its function is as follows. Catalyzes the conversion of L-arabinose to L-ribulose. In vitro, converts D-galactose into D-tagatose. This chain is L-arabinose isomerase (araA), found in Geobacillus stearothermophilus (Bacillus stearothermophilus).